Here is a 260-residue protein sequence, read N- to C-terminus: Glutathione S-transferase domain-containing protein DDB_G0280881 (260 aa).

A GST N-terminal domain is found at 7-96 (KVDFIFYTNG…YLAQKYNTFL (90 aa)). The 127-residue stretch at 102–228 (NPKENSDVIT…QQISEGFKNF (127 aa)) folds into the GST C-terminal domain.

It belongs to the GST superfamily.

The sequence is that of Glutathione S-transferase domain-containing protein DDB_G0280881 from Dictyostelium discoideum (Social amoeba).